The primary structure comprises 273 residues: 3-methyl-2-oxobutanoate hydroxymethyltransferase (273 aa).

Residues Asp-53 and Asp-92 each contribute to the Mg(2+) site. Residues 53-54 (DS), Asp-92, and Lys-122 contribute to the 3-methyl-2-oxobutanoate site. Glu-124 is a Mg(2+) binding site. Catalysis depends on Glu-191, which acts as the Proton acceptor.

It belongs to the PanB family. Homodecamer; pentamer of dimers. Requires Mg(2+) as cofactor.

The protein localises to the cytoplasm. It carries out the reaction 3-methyl-2-oxobutanoate + (6R)-5,10-methylene-5,6,7,8-tetrahydrofolate + H2O = 2-dehydropantoate + (6S)-5,6,7,8-tetrahydrofolate. It participates in cofactor biosynthesis; (R)-pantothenate biosynthesis; (R)-pantoate from 3-methyl-2-oxobutanoate: step 1/2. Functionally, catalyzes the reversible reaction in which hydroxymethyl group from 5,10-methylenetetrahydrofolate is transferred onto alpha-ketoisovalerate to form ketopantoate. The polypeptide is 3-methyl-2-oxobutanoate hydroxymethyltransferase (Phocaeicola vulgatus (strain ATCC 8482 / DSM 1447 / JCM 5826 / CCUG 4940 / NBRC 14291 / NCTC 11154) (Bacteroides vulgatus)).